The sequence spans 212 residues: Pyridoxine/pyridoxamine 5'-phosphate oxidase (212 aa).

Substrate is bound by residues 8-11 and Lys-66; that span reads RREY. Residues 61 to 66, 76 to 77, Arg-82, Lys-83, and Gln-105 contribute to the FMN site; these read RIVLLK and FT. Substrate contacts are provided by Tyr-123, Arg-127, and Ser-131. FMN-binding positions include 140–141 and Trp-185; that span reads QS. Substrate is bound at residue 191 to 193; it reads RLH. Arg-195 is a binding site for FMN.

This sequence belongs to the pyridoxamine 5'-phosphate oxidase family. As to quaternary structure, homodimer. FMN is required as a cofactor.

It carries out the reaction pyridoxamine 5'-phosphate + O2 + H2O = pyridoxal 5'-phosphate + H2O2 + NH4(+). The catalysed reaction is pyridoxine 5'-phosphate + O2 = pyridoxal 5'-phosphate + H2O2. It participates in cofactor metabolism; pyridoxal 5'-phosphate salvage; pyridoxal 5'-phosphate from pyridoxamine 5'-phosphate: step 1/1. The protein operates within cofactor metabolism; pyridoxal 5'-phosphate salvage; pyridoxal 5'-phosphate from pyridoxine 5'-phosphate: step 1/1. In terms of biological role, catalyzes the oxidation of either pyridoxine 5'-phosphate (PNP) or pyridoxamine 5'-phosphate (PMP) into pyridoxal 5'-phosphate (PLP). The chain is Pyridoxine/pyridoxamine 5'-phosphate oxidase from Shewanella baltica (strain OS223).